The primary structure comprises 337 residues: Pyruvate dehydrogenase E1 component subunit beta (337 aa).

Glu-73 is a thiamine diphosphate binding site.

In terms of assembly, heterodimer of an alpha and a beta chain. Thiamine diphosphate is required as a cofactor.

The enzyme catalyses N(6)-[(R)-lipoyl]-L-lysyl-[protein] + pyruvate + H(+) = N(6)-[(R)-S(8)-acetyldihydrolipoyl]-L-lysyl-[protein] + CO2. The pyruvate dehydrogenase complex catalyzes the overall conversion of pyruvate to acetyl-CoA and CO(2). It contains multiple copies of three enzymatic components: pyruvate dehydrogenase (E1), dihydrolipoamide acetyltransferase (E2) and lipoamide dehydrogenase (E3). The chain is Pyruvate dehydrogenase E1 component subunit beta (pdhB) from Leifsonia xyli subsp. xyli (strain CTCB07).